The sequence spans 202 residues: MKRIVILDYGLGNLRSVQKGLEHVGSSPAISGDPEEILAADGLILPGVGAFVDAMKCLDPIKGTIEEYARSGKPMLGICLGQQVLMSSSEEGKLTDGLDLISGKVLRFPKSELKVPHIGWNNIKIKQDHPLFEGIPDNSFVYFVHSFYVDTASENTLASCNYGLDFSASVVNSKGNVMGTQFHPEKSGAIGLKILKNFVDMC.

The Glutamine amidotransferase type-1 domain maps to R3–C202. Residue C79 is the Nucleophile of the active site. Active-site residues include H183 and E185.

As to quaternary structure, heterodimer of HisH and HisF.

The protein resides in the cytoplasm. The enzyme catalyses 5-[(5-phospho-1-deoxy-D-ribulos-1-ylimino)methylamino]-1-(5-phospho-beta-D-ribosyl)imidazole-4-carboxamide + L-glutamine = D-erythro-1-(imidazol-4-yl)glycerol 3-phosphate + 5-amino-1-(5-phospho-beta-D-ribosyl)imidazole-4-carboxamide + L-glutamate + H(+). The catalysed reaction is L-glutamine + H2O = L-glutamate + NH4(+). Its pathway is amino-acid biosynthesis; L-histidine biosynthesis; L-histidine from 5-phospho-alpha-D-ribose 1-diphosphate: step 5/9. Functionally, IGPS catalyzes the conversion of PRFAR and glutamine to IGP, AICAR and glutamate. The HisH subunit catalyzes the hydrolysis of glutamine to glutamate and ammonia as part of the synthesis of IGP and AICAR. The resulting ammonia molecule is channeled to the active site of HisF. This Methanosarcina barkeri (strain Fusaro / DSM 804) protein is Imidazole glycerol phosphate synthase subunit HisH.